Here is a 304-residue protein sequence, read N- to C-terminus: 4-diphosphocytidyl-2-C-methyl-D-erythritol kinase (304 aa).

Residue Lys23 is part of the active site. 111 to 121 (PIGGGLGGGSS) serves as a coordination point for ATP. The active site involves Asp153.

The protein belongs to the GHMP kinase family. IspE subfamily. As to quaternary structure, homodimer.

The catalysed reaction is 4-CDP-2-C-methyl-D-erythritol + ATP = 4-CDP-2-C-methyl-D-erythritol 2-phosphate + ADP + H(+). It functions in the pathway isoprenoid biosynthesis; isopentenyl diphosphate biosynthesis via DXP pathway; isopentenyl diphosphate from 1-deoxy-D-xylulose 5-phosphate: step 3/6. Functionally, catalyzes the phosphorylation of the position 2 hydroxy group of 4-diphosphocytidyl-2C-methyl-D-erythritol. The polypeptide is 4-diphosphocytidyl-2-C-methyl-D-erythritol kinase (Wigglesworthia glossinidia brevipalpis).